The chain runs to 265 residues: Seminal vesicle secretory protein 3A (265 aa).

The first 20 residues, 1-20, serve as a signal peptide directing secretion; sequence MKSIFFSLSLLLLLEKKAAG. Tandem repeats lie at residues 116-119, 122-125, 129-132, 136-139, and 142-145. Residues 116–145 form a 5 X 4 AA tandem repeats of Q-X-K-[ST] region; the sequence is QIKSQTQVKSYAAQLKSQPGQLKTIGQVKS.

In terms of processing, glycosylated. Post-translationally, covalently cross-linked by transglutaminase, which is important for the formation of the gelatinous copulatory plug. Five repeats of Q-X-K-(S/T) in the central region of the protein serve as the transglutaminase substrate site(s). In terms of tissue distribution, highly expressed in the seminal vesicle where it is detected in luminal epithelium of the mucosa folds, and also in luminal fluid (at protein level). Not detected in other tissues tested.

It is found in the secreted. Functionally, component of the copulatory plug. This Mus musculus (Mouse) protein is Seminal vesicle secretory protein 3A.